We begin with the raw amino-acid sequence, 131 residues long: Metalloproteinase inhibitor (131 aa).

An N-terminal signal peptide occupies residues 1–29 (MVRKRALGLAGSALTLVLGAVGFTAPAQA). Intrachain disulfides connect Cys33-Cys39 and Cys93-Cys98.

Its function is as follows. Inhibits microbial metallo-proteinases, such as thermolysin, but not serine, thiol, or carboxyl proteinases. In Streptomyces nigrescens, this protein is Metalloproteinase inhibitor (smpI).